A 138-amino-acid polypeptide reads, in one-letter code: RuBisCO chaperone RbcX (138 aa).

The tract at residues 118 to 138 is disordered; that stretch reads VDNFPSETSNGESNNNDSPPS. Residues 122–138 are compositionally biased toward polar residues; the sequence is PSETSNGESNNNDSPPS.

The protein belongs to the RbcX family. In terms of assembly, homodimer. Interacts with the exposed C-terminal peptide of RbcL via its central cleft, contacts a second RbcL monomer via its peripheral polar surface.

The protein resides in the carboxysome. It localises to the cytoplasm. Functionally, an RbcL-specific chaperone. The central cleft of the RbcX homodimer (RbcX2) binds the C-terminus of an RbcL monomer, stabilizing the C-terminus and probably preventing its reassociation with chaperonin GroEL-ES. At the same time the peripheral region of RbcX2 binds a second RbcL monomer, bridging the RbcL homodimers in the correct orientation. The RbcX2(2)-bound RbcL dimers then assemble into the RbcL8 core (RbcL8-(RbcX2)8). RbcS binding triggers the release of RbcX2. This Synechocystis sp. (strain ATCC 27184 / PCC 6803 / Kazusa) protein is RuBisCO chaperone RbcX.